We begin with the raw amino-acid sequence, 344 residues long: Ion-translocating oxidoreductase complex subunit D (344 aa).

The next 4 helical transmembrane spans lie at 23–43 (LVLGACVPGLLTLTWLYGPGT), 44–64 (LLNLAWASLVALACEAAMLAL), 77–99 (SALVTALLLAVALPPYAPWWLTL), and 120–140 (PFNPAMLGYVVALVSFPLEMT). The residue at position 172 (Thr-172) is an FMN phosphoryl threonine. A run of 5 helical transmembrane segments spans residues 198 to 218 (LGSAGSEWVNLAFLLGGLFLL), 222 to 242 (LFTWHAPLGMLAGLFAMSLLF), 252 to 272 (GSPLFHLFSGATMLGAFFIVT), 285 to 305 (LVFGLGVGVLTYVIRAWGGYP), and 306 to 326 (DGVAFAVLLMNLAAPTIDYYT).

This sequence belongs to the NqrB/RnfD family. In terms of assembly, the complex is composed of six subunits: RnfA, RnfB, RnfC, RnfD, RnfE and RnfG. FMN serves as cofactor.

It localises to the cell inner membrane. Its function is as follows. Part of a membrane-bound complex that couples electron transfer with translocation of ions across the membrane. The protein is Ion-translocating oxidoreductase complex subunit D of Pseudomonas aeruginosa (strain UCBPP-PA14).